Here is a 479-residue protein sequence, read N- to C-terminus: Galactosylgalactosylxylosylprotein 3-beta-glucuronosyltransferase P (479 aa).

The Cytoplasmic portion of the chain corresponds to 1 to 34 (MKGGNYTSLGTCSGINVSGNVAGTRKMSLGKSIK). A helical; Signal-anchor for type II membrane protein membrane pass occupies residues 35–50 (MYLTIFILTTCIYMAL). Topologically, residues 51–479 (YQYHISREPF…EHIDRLLVRP (429 aa)) are lumenal. N-linked (GlcNAc...) asparagine glycosylation is found at Asn90, Asn97, Asn98, and Asn271. A compositionally biased stretch (low complexity) spans 94 to 120 (NTNNNSTTTSTTTTTAPTTPTTTTTTT). A disordered region spans residues 94–122 (NTNNNSTTTSTTTTTAPTTPTTTTTTTVG). Asp335 provides a ligand contact to Mn(2+). Glu418 acts as the Proton acceptor in catalysis. Asn460 is a glycosylation site (N-linked (GlcNAc...) asparagine).

The protein belongs to the glycosyltransferase 43 family. Requires Mn(2+) as cofactor.

It localises to the golgi apparatus membrane. It carries out the reaction 3-O-(beta-D-galactosyl-(1-&gt;3)-beta-D-galactosyl-(1-&gt;4)-beta-D-xylosyl)-L-seryl-[protein] + UDP-alpha-D-glucuronate = 3-O-(beta-D-GlcA-(1-&gt;3)-beta-D-Gal-(1-&gt;3)-beta-D-Gal-(1-&gt;4)-beta-D-Xyl)-L-seryl-[protein] + UDP + H(+). The protein operates within protein modification; protein glycosylation. Its function is as follows. Involved in the biosynthesis of L2/HNK-1 carbohydrate epitope on both glycolipids and glycoproteins. Enzyme has a broad specificity. This Drosophila melanogaster (Fruit fly) protein is Galactosylgalactosylxylosylprotein 3-beta-glucuronosyltransferase P (GlcAT-P).